The primary structure comprises 232 residues: Ribonuclease 3 (232 aa).

One can recognise an RNase III domain in the interval 5 to 134 (QTVLKNHFAI…FLGALLLDKD (130 aa)). Residue glutamate 47 coordinates Mg(2+). The active site involves aspartate 51. Aspartate 120 and glutamate 123 together coordinate Mg(2+). Glutamate 123 is a catalytic residue. Residues 160–229 (DYKTHLQELL…AKNAVEKGLD (70 aa)) enclose the DRBM domain.

It belongs to the ribonuclease III family. Homodimer. Mg(2+) is required as a cofactor.

The protein localises to the cytoplasm. The enzyme catalyses Endonucleolytic cleavage to 5'-phosphomonoester.. Functionally, digests double-stranded RNA. Involved in the processing of primary rRNA transcript to yield the immediate precursors to the large and small rRNAs (23S and 16S). Processes some mRNAs, and tRNAs when they are encoded in the rRNA operon. Processes pre-crRNA and tracrRNA of type II CRISPR loci if present in the organism. The protein is Ribonuclease 3 of Streptococcus pneumoniae (strain Hungary19A-6).